We begin with the raw amino-acid sequence, 352 residues long: Probable tyrosine-protein kinase DDB_G0290471 (352 aa).

Residues 51-333 enclose the Protein kinase domain; that stretch reads IEYVCRLGSG…ISLNQIRSFY (283 aa). Residues 57-65 and lysine 78 each bind ATP; that span reads LGSGSLCRV. Aspartate 175 (proton acceptor) is an active-site residue.

It belongs to the protein kinase superfamily. TKL Tyr protein kinase family.

The catalysed reaction is L-tyrosyl-[protein] + ATP = O-phospho-L-tyrosyl-[protein] + ADP + H(+). The sequence is that of Probable tyrosine-protein kinase DDB_G0290471 from Dictyostelium discoideum (Social amoeba).